Consider the following 294-residue polypeptide: 33 kDa chaperonin (294 aa).

2 cysteine pairs are disulfide-bonded: cysteine 238-cysteine 240 and cysteine 271-cysteine 274.

It belongs to the HSP33 family. Under oxidizing conditions two disulfide bonds are formed involving the reactive cysteines. Under reducing conditions zinc is bound to the reactive cysteines and the protein is inactive.

It is found in the cytoplasm. Redox regulated molecular chaperone. Protects both thermally unfolding and oxidatively damaged proteins from irreversible aggregation. Plays an important role in the bacterial defense system toward oxidative stress. This Staphylococcus carnosus (strain TM300) protein is 33 kDa chaperonin.